A 434-amino-acid polypeptide reads, in one-letter code: MANFDLTRINCQFLDRHLTFPLLEFLCGKEIYNQQELLEYILETVNKTNMIDYTMDTRKRLNLSQEMPDELVQRKAEVLATLKQLQNEVAPIMKATDILKNGESMKDSKTFVNALQKDYNFKVEHLESAYKLAKYLYECGNYQESTSYLYFCLIVMSPNDKNYLNVLWGKLAAEILTLNWNTALEDLTRLRDYIDSANFSTIQALQQRTWLIHWSVLVFFNHPKGRDLIIEMFLYKPLYLNAIQTMCPHIMRYLATAVVINRTRRNALKDLIKVIQQESYTYRDPITEFLECLYVNFDFEGARLKLHECQTVILNDFFIVACLNEFVEDARLMIFETFCRIHQCITISMLADKLNMKPNEAECWIVNLIRNARLNAKIDSKLGHVVMGTQPLSPYQQLVEKIDSLSMRSEHLAGLIERKSKQNNKESIDSWKYY.

The PCI domain occupies 219–392; sequence FFNHPKGRDL…GHVVMGTQPL (174 aa).

Belongs to the eIF-3 subunit E family. Component of the eukaryotic translation initiation factor 3 (eIF-3) complex. The eIF-3 complex interacts with pix. Interacts with mxt.

The protein resides in the cytoplasm. Its function is as follows. Component of the eukaryotic translation initiation factor 3 (eIF-3) complex, which is involved in protein synthesis of a specialized repertoire of mRNAs and, together with other initiation factors, stimulates binding of mRNA and methionyl-tRNAi to the 40S ribosome. The eIF-3 complex specifically targets and initiates translation of a subset of mRNAs involved in cell proliferation. In Drosophila persimilis (Fruit fly), this protein is Eukaryotic translation initiation factor 3 subunit E (eIF3-S6).